The sequence spans 267 residues: Phosphatidylglycerol--prolipoprotein diacylglyceryl transferase (267 aa).

4 helical membrane passes run 10 to 30, 54 to 74, 90 to 110, and 116 to 136; these read VAIA…VVGF, LLFY…ALFY, WDGG…AWLF, and LAFF…LGAG. Residue arginine 137 coordinates a 1,2-diacyl-sn-glycero-3-phospho-(1'-sn-glycerol). A run of 3 helical transmembrane segments spans residues 169 to 189, 197 to 217, and 231 to 251; these read PSPL…LWWV, GMIS…VEFV, and WLTM…ALCV.

It belongs to the Lgt family.

It is found in the cell inner membrane. The catalysed reaction is L-cysteinyl-[prolipoprotein] + a 1,2-diacyl-sn-glycero-3-phospho-(1'-sn-glycerol) = an S-1,2-diacyl-sn-glyceryl-L-cysteinyl-[prolipoprotein] + sn-glycerol 1-phosphate + H(+). It functions in the pathway protein modification; lipoprotein biosynthesis (diacylglyceryl transfer). Functionally, catalyzes the transfer of the diacylglyceryl group from phosphatidylglycerol to the sulfhydryl group of the N-terminal cysteine of a prolipoprotein, the first step in the formation of mature lipoproteins. The polypeptide is Phosphatidylglycerol--prolipoprotein diacylglyceryl transferase (Chromohalobacter salexigens (strain ATCC BAA-138 / DSM 3043 / CIP 106854 / NCIMB 13768 / 1H11)).